Here is a 330-residue protein sequence, read N- to C-terminus: Lipoyl synthase (330 aa).

The [4Fe-4S] cluster site is built by Cys-55, Cys-60, Cys-66, Cys-81, Cys-85, Cys-88, and Ser-292. Positions 67–281 constitute a Radical SAM core domain; that stretch reads WEDREATFLI…AEEAREIGFV (215 aa).

This sequence belongs to the radical SAM superfamily. Lipoyl synthase family. [4Fe-4S] cluster is required as a cofactor.

The protein resides in the cytoplasm. It catalyses the reaction [[Fe-S] cluster scaffold protein carrying a second [4Fe-4S](2+) cluster] + N(6)-octanoyl-L-lysyl-[protein] + 2 oxidized [2Fe-2S]-[ferredoxin] + 2 S-adenosyl-L-methionine + 4 H(+) = [[Fe-S] cluster scaffold protein] + N(6)-[(R)-dihydrolipoyl]-L-lysyl-[protein] + 4 Fe(3+) + 2 hydrogen sulfide + 2 5'-deoxyadenosine + 2 L-methionine + 2 reduced [2Fe-2S]-[ferredoxin]. It functions in the pathway protein modification; protein lipoylation via endogenous pathway; protein N(6)-(lipoyl)lysine from octanoyl-[acyl-carrier-protein]: step 2/2. Its function is as follows. Catalyzes the radical-mediated insertion of two sulfur atoms into the C-6 and C-8 positions of the octanoyl moiety bound to the lipoyl domains of lipoate-dependent enzymes, thereby converting the octanoylated domains into lipoylated derivatives. The sequence is that of Lipoyl synthase from Cutibacterium acnes (strain DSM 16379 / KPA171202) (Propionibacterium acnes).